A 258-amino-acid chain; its full sequence is ProSAAS (258 aa).

Positions 1-33 are cleaved as a signal peptide; it reads MAGSPLLCGPRAGGVGILVLLLLGLLRLPPTLS. A proSAAS(1-180) region spans residues 34 to 213; it reads ARPVKEPRSL…SSEPEAAPAP (180 aa). 3 disordered regions span residues 156 to 188, 204 to 230, and 239 to 258; these read PAPA…TPDV, SSEP…EVPP, and RVKR…LLPP. Over residues 177–188 the composition is skewed to acidic residues; that stretch reads DVEDAGDETPDV. The span at 204–213 shows a compositional bias: low complexity; it reads SSEPEAAPAP. A C-terminal inhibitory domain; interacts with PCSK1 region spans residues 219–258; sequence SVDQDLGPEVPPENVLGALLRVKRLENPSPQAPARRLLPP. Residues 237–242 carry the Sufficient for inhibition of PCSK1 motif; that stretch reads LLRVKR.

Interacts via the C-terminal inhibitory domain with PCSK1 66 kDa form. Post-translationally, proteolytically cleaved in the Golgi. Little SAAS, PEN, PEN-20 and Big LEN are the major processed peptides in proSAAS-overexpressing AtT-20 pituitary corticotropic cell line. In terms of tissue distribution, expressed in brain (mostly hypothalamus and pituitary) and gut. Expressed in trigeminal ganglia and neuroendocrine cell lines. Expressed in pancreas, spinal cord and brain (most abundant in striatum, hippocampus, pons and medulla, and cortex) (at protein level).

It localises to the secreted. The protein resides in the golgi apparatus. The protein localises to the trans-Golgi network. In terms of biological role, may function in the control of the neuroendocrine secretory pathway. Proposed be a specific endogenous inhibitor of PCSK1. ProSAAS and Big PEN-LEN, both containing the C-terminal inhibitory domain, but not the processed peptides reduce PCSK1 activity in the endoplasmic reticulum and Golgi. It reduces the activity of the 87 kDa form but not the autocatalytically derived 66 kDa form of PCSK1. Subsequent processing of proSAAS may eliminate the inhibition. Slows down convertase-mediated processing of proopiomelanocortin and proenkephalin. May control the intracellular timing of PCSK1 rather than its total level of activity. Endogenous ligand for GPR171. Neuropeptide involved in the regulation of feeding. Functionally, endogenous ligand for GPR171. Neuropeptide involved in the regulation of feeding. This is ProSAAS (Pcsk1n) from Mus musculus (Mouse).